The sequence spans 552 residues: MAQAQLPLDTPLSLPEHPKAWKWYDYFTFNVDHKVIGIQYLVTAFIFYLIGGLMAVAMRTELATADSDFLDPNLYNAFLTNHGTIMIFLWVVPAAIGGFGNYLVPLMIGARDMAFPRLNALAFWLNPPAGALLLASFLFGGAQAGWTSYPPLSTITATTAQSMWILAIILVGTSSILGSVNFIVTIWKMKVPSMRWNQLPLFCWAMLATSLLALVSTPVLAAGLILLLFDINFGTSFYKPDAGGNVVIYQHLFWFYSHPAVYLMILPIFGIMSEVIPVHARKPIFGYQAIAYSSLAICCVGLFVWVHHMFTSGTPPWMRMFFTISTLIVAVPTGVKIFSWVATLWGGKIRLNSAMLFAIGLMSMFVLGGLSGVTLGTAPVDIHVHDTYYVVAHFHYVLFGGSVFGLYAGIYHWFPKMTGRLLDERLGILHFVLTLIGTNWTFLPMHELGLKGMPRRVAMYDPQFEPVNLICTIGAFVLAFSIIPFLINIIWSWNKGKIAGDNPWGGLTLEWTTSSPPLIENWEVLPVVTKGPYDYGIERRQESTDEDHDEQE.

The helical transmembrane segment at 35–55 (VIGIQYLVTAFIFYLIGGLMA) threads the bilayer. H82 is a Fe(II)-heme a binding site. Transmembrane regions (helical) follow at residues 85–105 (IMIFLWVVPAAIGGFGNYLVP), 120–140 (ALAFWLNPPAGALLLASFLFG), 164–184 (WILAIILVGTSSILGSVNFIV), 211–231 (LLALVSTPVLAAGLILLLFDI), 252–272 (LFWFYSHPAVYLMILPIFGIM), and 284–304 (IFGYQAIAYSSLAICCVGLFV). Cu cation-binding residues include H258 and Y262. A cross-link (1'-histidyl-3'-tyrosine (His-Tyr)) is located at residues 258–262 (HPAVY). Residues H307 and H308 each contribute to the Cu cation site. The next 5 helical transmembrane spans lie at 321–341 (FFTISTLIVAVPTGVKIFSWV), 355–375 (MLFAIGLMSMFVLGGLSGVTL), 390–410 (VVAHFHYVLFGGSVFGLYAGI), 426–446 (LGILHFVLTLIGTNWTFLPMH), and 470–490 (ICTIGAFVLAFSIIPFLINII). H393 is a binding site for heme a3. Position 395 (H395) interacts with Fe(II)-heme a.

This sequence belongs to the heme-copper respiratory oxidase family. It depends on Cu(2+) as a cofactor. The cofactor is heme.

It is found in the cell membrane. The catalysed reaction is 4 Fe(II)-[cytochrome c] + O2 + 8 H(+)(in) = 4 Fe(III)-[cytochrome c] + 2 H2O + 4 H(+)(out). The protein operates within energy metabolism; oxidative phosphorylation. Its function is as follows. Cytochrome c oxidase is the component of the respiratory chain that catalyzes the reduction of oxygen to water. Subunits 1-3 form the functional core of the enzyme complex. CO I is the catalytic subunit of the enzyme. Electrons originating in cytochrome c are transferred via the copper A center of subunit 2 and heme A of subunit 1 to the bimetallic center formed by heme A3 and copper B. This is Cytochrome c oxidase subunit 1 (ctaD) from Thermostichus vulcanus (Synechococcus vulcanus).